The following is a 316-amino-acid chain: Aspartate carbamoyltransferase catalytic subunit (316 aa).

Positions 56 and 57 each coordinate carbamoyl phosphate. Lys-84 contributes to the L-aspartate binding site. Carbamoyl phosphate contacts are provided by Arg-106, His-139, and Gln-142. Arg-172 and Arg-224 together coordinate L-aspartate. Carbamoyl phosphate is bound by residues Gly-268 and Pro-269.

This sequence belongs to the aspartate/ornithine carbamoyltransferase superfamily. ATCase family. As to quaternary structure, heterododecamer (2C3:3R2) of six catalytic PyrB chains organized as two trimers (C3), and six regulatory PyrI chains organized as three dimers (R2).

The catalysed reaction is carbamoyl phosphate + L-aspartate = N-carbamoyl-L-aspartate + phosphate + H(+). Its pathway is pyrimidine metabolism; UMP biosynthesis via de novo pathway; (S)-dihydroorotate from bicarbonate: step 2/3. Functionally, catalyzes the condensation of carbamoyl phosphate and aspartate to form carbamoyl aspartate and inorganic phosphate, the committed step in the de novo pyrimidine nucleotide biosynthesis pathway. This chain is Aspartate carbamoyltransferase catalytic subunit, found in Ligilactobacillus salivarius (strain UCC118) (Lactobacillus salivarius).